Here is a 315-residue protein sequence, read N- to C-terminus: DNA-directed RNA polymerase subunit alpha (315 aa).

Residues 1-228 (MLEIEKPKIE…EHLRLFIGLT (228 aa)) form an alpha N-terminal domain (alpha-NTD) region. The alpha C-terminal domain (alpha-CTD) stretch occupies residues 245-315 (KDKILEMTIE…LGLGFRKADD (71 aa)).

It belongs to the RNA polymerase alpha chain family. As to quaternary structure, homodimer. The RNAP catalytic core consists of 2 alpha, 1 beta, 1 beta' and 1 omega subunit. When a sigma factor is associated with the core the holoenzyme is formed, which can initiate transcription.

It carries out the reaction RNA(n) + a ribonucleoside 5'-triphosphate = RNA(n+1) + diphosphate. In terms of biological role, DNA-dependent RNA polymerase catalyzes the transcription of DNA into RNA using the four ribonucleoside triphosphates as substrates. In Desulfitobacterium hafniense (strain DSM 10664 / DCB-2), this protein is DNA-directed RNA polymerase subunit alpha.